The chain runs to 272 residues: Putative bark agglutinin LECRPA3 (272 aa).

Positions Pro1–Ser29 are cleaved as a signal peptide. 3 N-linked (GlcNAc...) asparagine glycosylation sites follow: Asn36, Asn39, and Asn65. Positions 150 and 152 each coordinate Mn(2+). Residues Asp152, Tyr154, Asn156, and Asp159 each coordinate Ca(2+). Mn(2+)-binding residues include Asp159 and His164.

Belongs to the leguminous lectin family. In terms of assembly, homotetramer. In terms of tissue distribution, weak expression in bark. The lectin accumulates in the inner bark in autumn.

In terms of biological role, bark lectins are storage proteins that probably maintain stocks of nitrogen during dormant period. Self-aggregatable molecules that can bind their own carbohydrate side chains. They could also play a role in the plant's defense against phytophagous invertebrates or herbivorous higher animals. In Robinia pseudoacacia (Black locust), this protein is Putative bark agglutinin LECRPA3.